The chain runs to 322 residues: F-actin-capping protein subunit beta (322 aa).

This sequence belongs to the F-actin-capping protein beta subunit family. As to quaternary structure, component of the F-actin capping complex, composed of a heterodimer of an alpha and a beta subunit.

The protein localises to the cytoplasm. The protein resides in the cytoskeleton. It is found in the actin patch. In terms of biological role, F-actin-capping proteins bind in a Ca(2+)-independent manner to the fast growing ends of actin filaments (barbed end) thereby blocking the exchange of subunits at these ends. Unlike other capping proteins (such as gelsolin and severin), these proteins do not sever actin filaments. The chain is F-actin-capping protein subunit beta (cap2) from Aspergillus fumigatus (strain ATCC MYA-4609 / CBS 101355 / FGSC A1100 / Af293) (Neosartorya fumigata).